The primary structure comprises 605 residues: YTH domain-containing protein ECT4 (605 aa).

Disordered regions lie at residues 249–274 (GVASSYSKANNNVPATRNQNSSSNSH) and 357–384 (ELNRGPRAKGTKATEEVSSEEVKKQTFD). Polar residues predominate over residues 256–274 (KANNNVPATRNQNSSSNSH). Over residues 368-383 (KATEEVSSEEVKKQTF) the composition is skewed to basic and acidic residues. In terms of domain architecture, YTH spans 414 to 551 (AKFFIIKSYS…EQGLKVVKIF (138 aa)). Residues 420 to 422 (KSY), aspartate 426, 436 to 437 (WA), asparagine 469, tryptophan 493, tryptophan 498, and tryptophan 506 each bind RNA. The tract at residues 580–605 (KQQQSQKQVWEGKTNDEKPGTVDSTM) is disordered.

In terms of tissue distribution, expressed in the shoot apex, at the sites of leaf formation, and in emerging leaves.

It localises to the cytoplasm. Specifically recognizes and binds N6-methyladenosine (m6A)-containing RNAs, and regulates mRNA stability. M6A is a modification present at internal sites of mRNAs and some non-coding RNAs and plays a role in mRNA stability and processing. Required for the correct timing of leaf formation and normal leaf morphology. The sequence is that of YTH domain-containing protein ECT4 from Arabidopsis thaliana (Mouse-ear cress).